Reading from the N-terminus, the 148-residue chain is Large ribosomal subunit protein bL9 (148 aa).

Belongs to the bacterial ribosomal protein bL9 family.

Functionally, binds to the 23S rRNA. This is Large ribosomal subunit protein bL9 from Frankia casuarinae (strain DSM 45818 / CECT 9043 / HFP020203 / CcI3).